A 1325-amino-acid chain; its full sequence is uncharacterized protein (1325 aa).

The first 27 residues, 1-27, serve as a signal peptide directing secretion; the sequence is MHTFTRKVKWPFMFTAIGLTFGIVAVA. C28 carries the N-palmitoyl cysteine lipid modification. A lipid anchor (S-diacylglycerol cysteine) is attached at C28. Disordered regions lie at residues 379 to 402 and 430 to 464; these read RAAS…GTTQ and NTNA…TGNS. Gly residues predominate over residues 436-448; it reads TGGGGSGGGGGTS. Low complexity predominate over residues 449 to 464; it reads TGSSTGSSTETTTGNS.

The protein belongs to the MG307/MG309/MG338 family.

It localises to the cell membrane. This is an uncharacterized protein from Mycoplasma pneumoniae (strain ATCC 29342 / M129 / Subtype 1) (Mycoplasmoides pneumoniae).